The sequence spans 616 residues: Dihydroxy-acid dehydratase (616 aa).

Asp81 is a binding site for Mg(2+). Cys122 contacts [2Fe-2S] cluster. Residues Asp123 and Lys124 each coordinate Mg(2+). An N6-carboxylysine modification is found at Lys124. Cys195 lines the [2Fe-2S] cluster pocket. Mg(2+) is bound at residue Glu491. Catalysis depends on Ser517, which acts as the Proton acceptor.

This sequence belongs to the IlvD/Edd family. In terms of assembly, homodimer. Requires [2Fe-2S] cluster as cofactor. It depends on Mg(2+) as a cofactor.

The enzyme catalyses (2R)-2,3-dihydroxy-3-methylbutanoate = 3-methyl-2-oxobutanoate + H2O. The catalysed reaction is (2R,3R)-2,3-dihydroxy-3-methylpentanoate = (S)-3-methyl-2-oxopentanoate + H2O. The protein operates within amino-acid biosynthesis; L-isoleucine biosynthesis; L-isoleucine from 2-oxobutanoate: step 3/4. It functions in the pathway amino-acid biosynthesis; L-valine biosynthesis; L-valine from pyruvate: step 3/4. In terms of biological role, functions in the biosynthesis of branched-chain amino acids. Catalyzes the dehydration of (2R,3R)-2,3-dihydroxy-3-methylpentanoate (2,3-dihydroxy-3-methylvalerate) into 2-oxo-3-methylpentanoate (2-oxo-3-methylvalerate) and of (2R)-2,3-dihydroxy-3-methylbutanoate (2,3-dihydroxyisovalerate) into 2-oxo-3-methylbutanoate (2-oxoisovalerate), the penultimate precursor to L-isoleucine and L-valine, respectively. The chain is Dihydroxy-acid dehydratase from Yersinia enterocolitica serotype O:8 / biotype 1B (strain NCTC 13174 / 8081).